The sequence spans 448 residues: Probable glycine dehydrogenase (decarboxylating) subunit 1 (448 aa).

The protein belongs to the GcvP family. N-terminal subunit subfamily. The glycine cleavage system is composed of four proteins: P, T, L and H. In this organism, the P 'protein' is a heterodimer of two subunits.

It catalyses the reaction N(6)-[(R)-lipoyl]-L-lysyl-[glycine-cleavage complex H protein] + glycine + H(+) = N(6)-[(R)-S(8)-aminomethyldihydrolipoyl]-L-lysyl-[glycine-cleavage complex H protein] + CO2. In terms of biological role, the glycine cleavage system catalyzes the degradation of glycine. The P protein binds the alpha-amino group of glycine through its pyridoxal phosphate cofactor; CO(2) is released and the remaining methylamine moiety is then transferred to the lipoamide cofactor of the H protein. The polypeptide is Probable glycine dehydrogenase (decarboxylating) subunit 1 (Lysinibacillus sphaericus (strain C3-41)).